The primary structure comprises 393 residues: CCA-adding enzyme (393 aa).

ATP is bound by residues glycine 27 and arginine 30. 2 residues coordinate CTP: glycine 27 and arginine 30. Positions 40 and 42 each coordinate Mg(2+). The ATP site is built by arginine 111, aspartate 154, arginine 157, arginine 160, and arginine 163. CTP-binding residues include arginine 111, aspartate 154, arginine 157, arginine 160, and arginine 163.

This sequence belongs to the tRNA nucleotidyltransferase/poly(A) polymerase family. Bacterial CCA-adding enzyme type 3 subfamily. Homodimer. Mg(2+) serves as cofactor.

The catalysed reaction is a tRNA precursor + 2 CTP + ATP = a tRNA with a 3' CCA end + 3 diphosphate. It carries out the reaction a tRNA with a 3' CCA end + 2 CTP + ATP = a tRNA with a 3' CCACCA end + 3 diphosphate. Its function is as follows. Catalyzes the addition and repair of the essential 3'-terminal CCA sequence in tRNAs without using a nucleic acid template. Adds these three nucleotides in the order of C, C, and A to the tRNA nucleotide-73, using CTP and ATP as substrates and producing inorganic pyrophosphate. tRNA 3'-terminal CCA addition is required both for tRNA processing and repair. Also involved in tRNA surveillance by mediating tandem CCA addition to generate a CCACCA at the 3' terminus of unstable tRNAs. While stable tRNAs receive only 3'-terminal CCA, unstable tRNAs are marked with CCACCA and rapidly degraded. The polypeptide is CCA-adding enzyme (Listeria monocytogenes serotype 4b (strain CLIP80459)).